The chain runs to 394 residues: Chorismate synthase (394 aa).

NADP(+)-binding residues include arginine 40 and arginine 46. Residues 135–137 (RAS), 255–256 (QA), glycine 302, 317–321 (KPISS), and arginine 343 each bind FMN.

The protein belongs to the chorismate synthase family. Homotetramer. It depends on FMNH2 as a cofactor.

It carries out the reaction 5-O-(1-carboxyvinyl)-3-phosphoshikimate = chorismate + phosphate. It functions in the pathway metabolic intermediate biosynthesis; chorismate biosynthesis; chorismate from D-erythrose 4-phosphate and phosphoenolpyruvate: step 7/7. Catalyzes the anti-1,4-elimination of the C-3 phosphate and the C-6 proR hydrogen from 5-enolpyruvylshikimate-3-phosphate (EPSP) to yield chorismate, which is the branch point compound that serves as the starting substrate for the three terminal pathways of aromatic amino acid biosynthesis. This reaction introduces a second double bond into the aromatic ring system. This chain is Chorismate synthase, found in Parafrankia sp. (strain EAN1pec).